The primary structure comprises 111 residues: Disintegrin acostatin-alpha (111 aa).

A signal peptide spans 1 to 20; that stretch reads MIQVLLVTLCLAVFPYQGSS. Positions 21 to 46 are excised as a propeptide; that stretch reads IILESGNVNDYEVVYPRKVTALPKGA. The region spanning 47–111 is the Disintegrin domain; the sequence is IQPKNPCCDA…GDCPRKHFYA (65 aa). Gln-48 bears the Pyrrolidone carboxylic acid; in Disintegrin acostatin-alpha, processed form mark. Intrachain disulfides connect Cys-53–Cys-76, Cys-67–Cys-73, Cys-72–Cys-97, and Cys-85–Cys-104. The Cell attachment site signature appears at 89–91; sequence RGD. Positions 110-111 are excised as a propeptide; that stretch reads YA.

This sequence belongs to the disintegrin family. Dimeric disintegrin subfamily. As to quaternary structure, heterodimer with subunit beta; disulfide-linked. As to expression, expressed by the venom gland.

Its subcellular location is the secreted. Functionally, inhibits fibrinogen interaction with platelets. Acts by binding to alpha-IIb/beta-3 (ITGA2B/ITGB3) on the platelet surface and inhibits ADP-induced platelet aggregation in human platelet-rich plasma. The sequence is that of Disintegrin acostatin-alpha from Agkistrodon contortrix contortrix (Southern copperhead).